Consider the following 311-residue polypeptide: MKWSEICIHTTHEAVEPISNILHEAGASGVVIEDPLDLIKERENVYGEIYQLDPNDYPDEGVIIKAYLPINSFLGETVEGIKETINNLLLYDIDLGRNKITISEVNEEEWATAWKKYYHPVKISEKFTIVPTWEEYTPVHTDELIIEMDPGMAFGTGTHPTTVLCIQALERYVKEGDSVVDVGTGTGILSIASAMLRAKQVEGYDLDPVAVESARLNSKLNKVSDHIEIKQNNLLDGVEGEKDIIVANILAEVILRFTDQAYSLLKDGGYFITSGIIQQKKQEVKDALVKEGFTIVEVLSMEDWVSIIAKK.

Residues T162, G183, D205, and N248 each coordinate S-adenosyl-L-methionine.

The protein belongs to the methyltransferase superfamily. PrmA family.

It is found in the cytoplasm. The enzyme catalyses L-lysyl-[protein] + 3 S-adenosyl-L-methionine = N(6),N(6),N(6)-trimethyl-L-lysyl-[protein] + 3 S-adenosyl-L-homocysteine + 3 H(+). In terms of biological role, methylates ribosomal protein L11. This Bacillus licheniformis (strain ATCC 14580 / DSM 13 / JCM 2505 / CCUG 7422 / NBRC 12200 / NCIMB 9375 / NCTC 10341 / NRRL NRS-1264 / Gibson 46) protein is Ribosomal protein L11 methyltransferase.